A 498-amino-acid polypeptide reads, in one-letter code: AP2-like ethylene-responsive transcription factor AIL7 (498 aa).

The segment covering 186 to 195 (TSDQPLSCNN) has biased composition (polar residues). The interval 186–220 (TSDQPLSCNNGERGGNSNKKKTVSKKETSDDSKKK) is disordered. Basic and acidic residues predominate over residues 209 to 220 (SKKETSDDSKKK). 2 consecutive DNA-binding regions (AP2/ERF) follow at residues 231-297 (IYRG…TNFP) and 333-391 (IYRG…TNFE). The segment covering 422–451 (ESPSSSSSDHNLQQQQLLPSSSPSDQNPNS) has biased composition (low complexity). Residues 422–452 (ESPSSSSSDHNLQQQQLLPSSSPSDQNPNSI) are disordered.

It belongs to the AP2/ERF transcription factor family. AP2 subfamily. As to quaternary structure, interacts with HDG2, and possibly with HDG3, HDG7, ANL2, ATML1 and PDF2. As to expression, expressed in roots, seedlings, inflorescence, and siliques. Also detected at low levels in leaves.

The protein resides in the nucleus. Probably acts as a transcriptional activator. Binds to the GCC-box pathogenesis-related promoter element. May be involved in the regulation of gene expression by stress factors and by components of stress signal transduction pathways. The protein is AP2-like ethylene-responsive transcription factor AIL7 of Arabidopsis thaliana (Mouse-ear cress).